The chain runs to 263 residues: Interleukin-33 (263 aa).

Residues methionine 1–alanine 17 are compositionally biased toward polar residues. The segment at methionine 1–arginine 28 is disordered. A homeodomain-like HTH domain region spans residues methionine 1 to arginine 65. Residues isoleucine 62–phenylalanine 103 form an interaction with RELA region.

Belongs to the IL-1 family. Highly divergent. Forms a 1:1:1 heterotrimeric complex with its primary high-affinity receptor IL1RL1 and the coreceptor IL1RAP. Interacts with cargo receptor TMED10; the interaction mediates the translocation from the cytoplasm into the ERGIC (endoplasmic reticulum-Golgi intermediate compartment) and thereby secretion. In terms of processing, the full-length protein can be released from cells and is able to signal via the IL1RL1/ST2 receptor. However, proteolytic processing by CELA1, CSTG/cathepsin G and ELANE/neutrophil elastase produces C-terminal peptides that are more active than the unprocessed full-length protein. May also be proteolytically processed by calpains. Proteolytic cleavage mediated by apoptotic caspases including CASP3 and CASP7 results in IL33 inactivation. In vitro proteolytic cleavage by CASP1 was reported but could not be confirmed in vivo suggesting that IL33 is probably not a direct substrate for that caspase. Expressed in cultured umbilical artery smooth muscle cells after stimulation with IL1A and IL1B, and to a lesser extent with IFNG. Expressed in vasospastic cerebral arteries after subarachnoid hemorrhage.

The protein resides in the nucleus. The protein localises to the chromosome. It is found in the cytoplasm. Its subcellular location is the cytoplasmic vesicle. It localises to the secretory vesicle. The protein resides in the secreted. Cytokine that binds to and signals through the IL1RL1/ST2 receptor which in turn activates NF-kappa-B and MAPK signaling pathways in target cells. Involved in the maturation of Th2 cells inducing the secretion of T-helper type 2-associated cytokines. Also involved in activation of mast cells, basophils, eosinophils and natural killer cells. Acts as a chemoattractant for Th2 cells, and may function as an 'alarmin', that amplifies immune responses during tissue injury. Induces rapid UCP2-dependent mitochondrial rewiring that attenuates the generation of reactive oxygen species and preserves the integrity of Krebs cycle required for persistent production of itaconate and subsequent GATA3-dependent differentiation of inflammation-resolving alternatively activated macrophages. In terms of biological role, in quiescent endothelia the uncleaved form is constitutively and abundantly expressed, and acts as a chromatin-associated nuclear factor with transcriptional repressor properties, it may sequester nuclear NF-kappaB/RELA, lowering expression of its targets. This form is rapidely lost upon angiogenic or pro-inflammatory activation. The chain is Interleukin-33 (IL33) from Canis lupus familiaris (Dog).